The sequence spans 95 residues: Large ribosomal subunit protein uL23 (95 aa).

Belongs to the universal ribosomal protein uL23 family. Part of the 50S ribosomal subunit. Contacts protein L29, and trigger factor when it is bound to the ribosome.

One of the early assembly proteins it binds 23S rRNA. One of the proteins that surrounds the polypeptide exit tunnel on the outside of the ribosome. Forms the main docking site for trigger factor binding to the ribosome. The protein is Large ribosomal subunit protein uL23 of Geobacillus thermodenitrificans (strain NG80-2).